Here is a 119-residue protein sequence, read N- to C-terminus: UPF0212 protein Mlab_0931 (119 aa).

The protein belongs to the UPF0212 family.

The sequence is that of UPF0212 protein Mlab_0931 from Methanocorpusculum labreanum (strain ATCC 43576 / DSM 4855 / Z).